The primary structure comprises 1035 residues: Kinesin-like protein KIN-4A (1035 aa).

Positions 10 to 369 (CVKVAVHVRP…LKYANRARNI (360 aa)) constitute a Kinesin motor domain. Position 89–96 (89–96 (GQTGSGKT)) interacts with ATP. Coiled-coil stretches lie at residues 380–437 (VADE…LRNH) and 498–702 (MLQD…RKSS). Disordered regions lie at residues 697-720 (EARK…HMTE), 766-787 (VMSG…NTLS), and 882-928 (HSES…PLSP). Composition is skewed to polar residues over residues 704–716 (RDNS…SPGS) and 778–787 (NGNSRANTLS). Residues 850–904 (NVAADARCQVREKEMEIKEMKEQMTELVTILRHSESRRRETEKQLKQREQAAVTA) are a coiled coil. Positions 882-898 (HSESRRRETEKQLKQRE) are enriched in basic and acidic residues. Over residues 902 to 926 (VTATTSPGNGNGSVKHSADDSNTPL) the composition is skewed to polar residues. The Nuclear localization signal signature appears at 971-987 (KKVSIAGQSGKLWRWKR). The disordered stretch occupies residues 1014–1035 (DETMTRTRPRPQLLPHRPQRVM).

The protein belongs to the TRAFAC class myosin-kinesin ATPase superfamily. Kinesin family. KIN-4 subfamily. As to quaternary structure, homodimer. In terms of tissue distribution, expressed in young tissues with cell divisions, including initiating adventitious roots, primary root tips, flower primordia, intercalary meristems, sub-epidermal regions of young culms and panicles.

It is found in the nucleus. The protein resides in the cytoplasm. It localises to the cytoskeleton. Its activity is regulated as follows. May be regulated by cyclin-dependent kinase A. Microtubule-dependent motor protein involved in the control of the oriented deposition of cellulose microfibrils. Involved in wall biogenesis and modification, and contributes to cell-cycle progression and cell division. Acts as a transcriptional activator in gibberellic acid (GA) biosynthesis pathway. Binds specifically to the DNA sequence 5'-ACCAACTTGAA-3' of the ent-kaurene oxidase 2 (CYP701A6 or OsKO2) promoter. May regulate CYP701A6 gene expression and mediates cell elongation by regulating the GA biosynthesis pathway. In Oryza sativa subsp. japonica (Rice), this protein is Kinesin-like protein KIN-4A.